A 430-amino-acid chain; its full sequence is Asparagine--tRNA ligase (430 aa).

Belongs to the class-II aminoacyl-tRNA synthetase family. Homodimer.

The protein resides in the cytoplasm. It carries out the reaction tRNA(Asn) + L-asparagine + ATP = L-asparaginyl-tRNA(Asn) + AMP + diphosphate + H(+). The polypeptide is Asparagine--tRNA ligase (Listeria monocytogenes serovar 1/2a (strain ATCC BAA-679 / EGD-e)).